The primary structure comprises 251 residues: 14-3-3-like protein (251 aa).

Belongs to the 14-3-3 family.

In Fucus vesiculosus (Bladder wrack), this protein is 14-3-3-like protein.